The chain runs to 80 residues: Defensin-like protein 276 (80 aa).

Residues 1 to 24 form the signal peptide; sequence MSGQKYQLVSLLLIICLLFSQSTA. Cystine bridges form between C27/C67, C33/C55, C39/C65, and C43/C66.

This sequence belongs to the DEFL family.

It is found in the secreted. The polypeptide is Defensin-like protein 276 (Arabidopsis thaliana (Mouse-ear cress)).